The following is a 634-amino-acid chain: Ras and EF-hand domain-containing protein homolog (634 aa).

EF-hand domains are found at residues 5-33 (EVEN…CPQL) and 33-68 (LDDN…TVQH). Ca(2+) is bound by residues Asp-46, Asp-48, Ser-50, Lys-52, and Glu-57. Residues 169-310 (LSEKKHENER…RCEFDQKQDE (142 aa)) are a coiled coil. The interval 212–234 (ARQEERDRLTKEKEEMRQRMSDE) is disordered. Residues 449-454 (AVGKSS), 552-555 (NKVD), and 585-586 (AL) each bind GTP. Residues 632–634 (RGS) constitute a propeptide, removed in mature form.

It belongs to the small GTPase superfamily. Rab family. Homodimer.

The protein localises to the cytoplasm. It is found in the perinuclear region. Functionally, binds GTP and GDP. Plays a role in uterine seam cell development. The chain is Ras and EF-hand domain-containing protein homolog from Caenorhabditis elegans.